The primary structure comprises 715 residues: Metastasis-associated protein MTA1 (715 aa).

Residues 1–164 (MAANMYRVGD…PQQKTLLADK (164 aa)) enclose the BAH domain. An ELM2 domain is found at 165 to 276 (GEIRVGNRYQ…KAISALVPQG (112 aa)). Lys-182 participates in a covalent cross-link: Glycyl lysine isopeptide (Lys-Gly) (interchain with G-Cter in ubiquitin). An SANT domain is found at 283 to 335 (DEMEEWSASEANLFEEALEKYGKDFTDIQQDFLPWKSLTSIIEYYYMWKTTDR). At Ser-386 the chain carries Phosphoserine. Residues 393-420 (CESCYTTQSYQWYSWGPPNMQCRLCASC) form a GATA-type; atypical zinc finger. The segment at 437 to 460 (DGERPGPNRNNMSPHGIPARSSGS) is disordered. Ser-449 carries the phosphoserine modification. A Glycyl lysine isopeptide (Lys-Gly) (interchain with G-Cter in SUMO2 and SUMO3) cross-link involves residue Lys-509. A Phosphoserine modification is found at Ser-522. Residues 542-552 (ETHPRPPKPDP) are compositionally biased toward basic and acidic residues. The disordered stretch occupies residues 542–590 (ETHPRPPKPDPVKSSSSVLSSLTPAKSAPVINNGSPTILGKRSYEQHNG). The SH3-binding signature appears at 545 to 552 (PRPPKPDP). Lys-549 participates in a covalent cross-link: Glycyl lysine isopeptide (Lys-Gly) (interchain with G-Cter in SUMO2). Over residues 553-565 (VKSSSSVLSSLTP) the composition is skewed to low complexity. Position 564 is a phosphothreonine (Thr-564). Ser-576 bears the Phosphoserine mark. Phosphothreonine is present on Thr-578. Lys-626 carries the post-translational modification N6-acetyllysine; alternate. Lys-626 is covalently cross-linked (Glycyl lysine isopeptide (Lys-Gly) (interchain with G-Cter in ubiquitin); alternate). Ser-639 is subject to Phosphoserine. Residues 656-686 (DVFYMATEETRKIRKLLSSSETKRAARRPYK) form an interaction with RBBP4 region. The disordered stretch occupies residues 673 to 715 (SSSETKRAARRPYKPIALRQSQALPLRPPPPAPVNDEPIVIED). The short motif at 696–705 (LPLRPPPPAP) is the SH3-binding element. The short motif at 711-715 (IVIED) is the SUMO interaction motif 1 (SIM); crucial for efficient sumoylation element.

This sequence belongs to the metastasis-associated protein family. As to quaternary structure, component of the nucleosome remodeling and deacetylase (NuRD) repressor complex, composed of core proteins MTA1, MTA2, MTA3, RBBP4, RBBP7, HDAC1, HDAC2, MBD2, MBD3, and peripherally associated proteins CDK2AP1, CDK2AP2, GATAD2A, GATAD2B, CHD3, CHD4 and CHD5. The exact stoichiometry of the NuRD complex is unknown, and some subunits such as MBD2 and MBD3, GATAD2A and GATAD2B, and CHD3, CHD4 and CHD5 define mutually exclusive NuRD complexes. Interacts with RBBP4; the interaction is direct. Interacts with BMAL1. Interacts with CLOCK. Interacts with COP1. Interacts with CSNK1G2 in the cytoplasm. Interacts with EP300. Interacts with HDAC2. Interacts with ITGB3BP/CENPR. Interacts with MBD3L2. Interacts with MDM2. Interacts with NACC2. Interacts with p53/TP53. Interacts with PIAS1. Interacts with PIAS3. Interacts with PIAS4. Interacts with PWWP2A. Interacts with PWWP2B. Interacts with SENP1. Interacts with SENP2. Interacts with SIX3; facilitates the binding of SIX3 to the core DNA motif of SIX3 promoter. Interacts with SUMO1. Interacts with SUMO2. Interacts with TFCP2L1; which is indispensable for TFCP2L1-mediated self-renewal-promoting effect and endoderm-inhibiting action. Interacts with TFAP2C. Interacts with TPR. Interacts with UBE2I/UBC9. Phosphorylation by CSNK1G2/CK1 triggered by estrogen enhances corepression of estrogen receptor (ER). In terms of processing, acetylation is essential for its transcriptional coactivator activity. Post-translationally, sumoylation positively regulates its transcriptional corepressor activity but does not affect the protein stability. Sumoylated preferentially by SUMO2 or SUMO3 than SUMO1. Sumoylation is enhanced by PIAS1/3/4 and preferentially sumoylated by SUMO2 in the presence of PIAS1/3/4. Desumoylated by SENP1. Ubiquitinated by COP1, which leads to proteasomal degradation. As to expression, widely expressed but not in skeletal muscle. Highly expressed in the brain, liver, kidney and cardiac muscle and in mammary tumors.

The protein resides in the nucleus. It is found in the nucleus envelope. It localises to the cytoplasm. The protein localises to the cytoskeleton. Transcriptional coregulator which can act as both a transcriptional corepressor and coactivator. Acts as a component of the histone deacetylase NuRD complex which participates in the remodeling of chromatin. In the NuRD complex, regulates transcription of its targets by modifying the acetylation status of the target chromatin and cofactor accessibility to the target DNA. In conjunction with other components of NuRD, acts as a transcriptional corepressor of BRCA1, ESR1, TFF1 and CDKN1A. Acts as a transcriptional coactivator of BCAS3, PAX5 and SUMO2, independent of the NuRD complex. Stimulates the expression of WNT1 by inhibiting the expression of its transcriptional corepressor SIX3. Regulates p53-dependent and -independent DNA repair processes following genotoxic stress. Regulates the stability and function of p53/TP53 by inhibiting its ubiquitination by COP1 and MDM2 thereby regulating the p53-dependent DNA repair. Plays a role in the regulation of the circadian clock and is essential for the generation and maintenance of circadian rhythms under constant light and for normal entrainment of behavior to light-dark (LD) cycles. Positively regulates the CLOCK-BMAL1 heterodimer mediated transcriptional activation of its own transcription and the transcription of CRY1. Regulates deacetylation of BMAL1 by regulating SIRT1 expression, resulting in derepressing CRY1-mediated transcription repression. With Tfcp2l1, promotes establishment and maintenance of pluripotency in embryonic stem cells (ESCs) and inhibits endoderm differentiation. This is Metastasis-associated protein MTA1 (Mta1) from Mus musculus (Mouse).